A 566-amino-acid chain; its full sequence is Sorting nexin lst-4 (566 aa).

The 61-residue stretch at 1-61 (MAQVKAEYDF…PESYVTPYQA (61 aa)) folds into the SH3 domain. Residues 59-179 (YQASRPPPVL…DRGSNKVNKN (121 aa)) are disordered. Over residues 63–77 (RPPPVLPPPLPPTSS) the composition is skewed to pro residues. Acidic residues predominate over residues 127-140 (DDFDDEWTDEDDEQ). Positions 143-154 (TRPNVQSSIGSN) are enriched in polar residues. The span at 155 to 173 (SRRDLSRSHSEHGGPDRGS) shows a compositional bias: basic and acidic residues. The region spanning 227 to 339 (YTCIVDKPKK…HFISCTDEKD (113 aa)) is the PX domain. A BAR domain is found at 362-566 (TVPHQPLDPN…KLTSLAARYD (205 aa)).

Belongs to the sorting nexin family. Homodimer. Isoform d interacts (via SH3 domain) with dyn-1. As to expression, expressed in vulval precursor cells (VPCs) and apoptotic germ cells. Colocalizes with actin, dyn-1 and rab-5 in early phagosomes.

The protein resides in the cytoplasm. The protein localises to the cytoplasmic vesicle. It is found in the phagosome membrane. In terms of biological role, involved in the signaling of vulval development by acting as a negative regulator of epidermal growth factor receptor (EGFR) signaling. Aids in phagosomal membrane tubule formation which is required for phagosomal fusion with endosomes and lysosomes. Also recruits rab-7 to phagosomes by an interaction with dyn-1. These are events leading to phagosome maturation which is a step in apoptotic cell corpse clearance. Binds phosphatidylinositol-3,4,5-trisphosphate. The protein is Sorting nexin lst-4 of Caenorhabditis elegans.